Here is a 338-residue protein sequence, read N- to C-terminus: MTRF1L release factor glutamine methyltransferase (338 aa).

S-adenosyl-L-methionine is bound by residues 167-171, Asp190, Trp225, and Asn239; that span reads GCGSG. 239–242 contacts substrate; the sequence is NPPY.

The protein belongs to the protein N5-glutamine methyltransferase family.

It localises to the mitochondrion. It carries out the reaction L-glutaminyl-[peptide chain release factor] + S-adenosyl-L-methionine = N(5)-methyl-L-glutaminyl-[peptide chain release factor] + S-adenosyl-L-homocysteine + H(+). N5-glutamine methyltransferase responsible for the methylation of the glutamine residue in the universally conserved GGQ motif of the mitochondrial translation release factors MTRF1, MTRF1L, MRPL58/ICT1 and MTRFR. This chain is MTRF1L release factor glutamine methyltransferase (HEMK1), found in Homo sapiens (Human).